Here is a 438-residue protein sequence, read N- to C-terminus: MLGLRDVCFDPMLSSYDYHPISLMSTVPNDREIVQAVVDIWRKDKATEKLGAAKLTGLVKLTHSDWQLSEKRVKTVMKAANLGLNQEKFCYAGSIMSHATPGLDMPEKVTLNIAKNRGKGLYAKKDIKKDEELWNEQAFLLVPPLEHVGIMRKGMGCAFCSRPFQSHNGVECPSCAAKWCDNQCKKKDVTHVAMWHESRHGKVTRVEWRAFEDFCVENGWMALYALGLLWLRVIRDPKKDEVQKQMMAFARVGQDERHKAVEQSNSLFASEQSEVLWKKGYEMLDKLLLDTEFSYEKDFLPGLGMFNINNVDGNMYLTQSHLNHSCEPNVDVKNVGRTQGISVRAKRDIKTGEELFTTYVNPEHQLDDRRYNLRVNWGFNCNCTRCKREEREEMEYLDELVSNWTIEHKRKEMKEEKKERTRTRTRSVHFDKEPEVVA.

An SET domain is found at Glu107–Val360. Basic and acidic residues-rich tracts occupy residues Lys409 to Glu419 and Val428 to Ala438. Residues Lys409–Ala438 form a disordered region.

The protein belongs to the class V-like SAM-binding methyltransferase superfamily. Histone-lysine methyltransferase family. SET5 subfamily.

The protein resides in the nucleus. Its subcellular location is the chromosome. It localises to the cytoplasm. It carries out the reaction L-lysyl-[histone] + S-adenosyl-L-methionine = N(6)-methyl-L-lysyl-[histone] + S-adenosyl-L-homocysteine + H(+). Histone methyltransferase that monomethylates 'Lys-5', 'Lys-8' and 'Lys-12' of histone H4 (H4K5me1, H4K8me1 and H4K12me1, respectively), thereby controlling gene expression and remodeling chromatin structures. The chain is Histone-lysine N-methyltransferase SET5 (SET5) from Yarrowia lipolytica (strain CLIB 122 / E 150) (Yeast).